The following is a 221-amino-acid chain: Early nodulin-like protein 4 (221 aa).

Residues 1–21 form the signal peptide; it reads MVFVKMTDVYLMIVMLMGLGF. In terms of domain architecture, Phytocyanin spans 29-130; that stretch reads HKFYVGGRDG…GQKLAVTVMS (102 aa). 2 N-linked (GlcNAc...) asparagine glycosylation sites follow: Asn59 and Asn85. Cys84 and Cys118 are oxidised to a cystine. Residues 130-185 are disordered; sequence STGHHSHTPRHPSPSPSPSASPVRKALLSPAPIPVHKALSSPAPTPGVDPSHSEVL. A lipid anchor (GPI-anchor amidated asparagine) is attached at Asn197. A propeptide spans 198–221 (removed in mature form); sequence LAGSVAPGVISLGLVLVIMISSMV.

The protein belongs to the early nodulin-like (ENODL) family. In terms of tissue distribution, confined to flowers.

Its subcellular location is the cell membrane. Its function is as follows. May act as a carbohydrate transporter. The sequence is that of Early nodulin-like protein 4 from Arabidopsis thaliana (Mouse-ear cress).